The sequence spans 282 residues: Eukaryotic translation initiation factor 3 subunit G (282 aa).

The disordered stretch occupies residues 1–27; sequence MSSSKSLDWADDEDYGTGLPSIQTFDN. 2 positions are modified to phosphoserine: S160 and S164. The RRM domain occupies 202 to 280; it reads ATLRVTNLSD…LILRCEFSKP (79 aa).

The protein belongs to the eIF-3 subunit G family. Component of the eukaryotic translation initiation factor 3 (eIF-3) complex. The eIF-3 complex appears to include tif32/eif3a, SPAC25G10.08/eif3b, tif33/eif3c, SPBC4C3.07/eif3f, tif35/eif3g and sum1/eif3i. This set of common subunits may also associate exclusively with either moe1/eif3d and int6/eif3e, or with SPAC821.05/eif3h and SPAC1751.03/eif3m. The eIF-3 complex may also include SPAC3A12.13c/eif3j.

The protein resides in the cytoplasm. RNA-binding component of the eukaryotic translation initiation factor 3 (eIF-3) complex, which is involved in protein synthesis of a specialized repertoire of mRNAs and, together with other initiation factors, stimulates binding of mRNA and methionyl-tRNAi to the 40S ribosome. The eIF-3 complex specifically targets and initiates translation of a subset of mRNAs involved in cell proliferation. This subunit can bind 18S rRNA. The protein is Eukaryotic translation initiation factor 3 subunit G (tif35) of Schizosaccharomyces pombe (strain 972 / ATCC 24843) (Fission yeast).